A 60-amino-acid polypeptide reads, in one-letter code: Large ribosomal subunit protein bL32 (60 aa).

The tract at residues 1–27 (MAVPRNRLSNARKNSKRAHHAKKPKSL) is disordered. A compositionally biased stretch (basic residues) spans 13–25 (KNSKRAHHAKKPK).

The protein belongs to the bacterial ribosomal protein bL32 family.

This is Large ribosomal subunit protein bL32 from Protochlamydia amoebophila (strain UWE25).